The sequence spans 378 residues: 4-hydroxy-3-methylbut-2-en-1-yl diphosphate synthase (flavodoxin) (378 aa).

Positions 268, 271, 303, and 310 each coordinate [4Fe-4S] cluster.

Belongs to the IspG family. [4Fe-4S] cluster serves as cofactor.

The enzyme catalyses (2E)-4-hydroxy-3-methylbut-2-enyl diphosphate + oxidized [flavodoxin] + H2O + 2 H(+) = 2-C-methyl-D-erythritol 2,4-cyclic diphosphate + reduced [flavodoxin]. It functions in the pathway isoprenoid biosynthesis; isopentenyl diphosphate biosynthesis via DXP pathway; isopentenyl diphosphate from 1-deoxy-D-xylulose 5-phosphate: step 5/6. In terms of biological role, converts 2C-methyl-D-erythritol 2,4-cyclodiphosphate (ME-2,4cPP) into 1-hydroxy-2-methyl-2-(E)-butenyl 4-diphosphate. The sequence is that of 4-hydroxy-3-methylbut-2-en-1-yl diphosphate synthase (flavodoxin) from Corynebacterium efficiens (strain DSM 44549 / YS-314 / AJ 12310 / JCM 11189 / NBRC 100395).